The primary structure comprises 193 residues: Protein SPEAR3 (193 aa).

Disordered stretches follow at residues 1–50 and 85–104; these read MGSS…GVAQ and GYPS…SSPP. Low complexity predominate over residues 14–26; sequence SSSSSPTSSSSSP. The SPL signature appears at 44–52; that stretch reads RGLGVAQLE. Low complexity predominate over residues 86-101; the sequence is YPSIPSSSPSFSYASS. The short motif at 187–193 is the EAR element; the sequence is LDLELRL.

As to quaternary structure, interacts with TPL and the TPR corepressors TPR1, TPR2, TPR3, TPR4, and with the TCP transcription factors TCP2, TCP3, TCP4, TCP5, TCP10, TCP13, TCP17 and TCP24. Interacts with SPL and SPEAR2. As to expression, expressed in shoot apical meristem, cotyledons and leaves. Detected at the leaf margins and in the vascular bundles at the base of the leaves.

Its subcellular location is the nucleus. In terms of biological role, transcriptional regulator of leaf development. Acts as an adapter-like transcriptional repressor recruiting TPL/TPR corepressors to inhibit the CIN-like TCP transcription factors. The polypeptide is Protein SPEAR3 (Arabidopsis thaliana (Mouse-ear cress)).